The sequence spans 196 residues: Protein/nucleic acid deglycase 3 (196 aa).

Cysteine 106 (nucleophile) is an active-site residue. The residue at position 106 (cysteine 106) is a Cysteine sulfinic acid (-SO2H); alternate.

It belongs to the peptidase C56 family. Homodimer. Cys-106 is easily oxidized to sulfinic acid.

The catalysed reaction is N(omega)-(1-hydroxy-2-oxopropyl)-L-arginyl-[protein] + H2O = lactate + L-arginyl-[protein] + H(+). It catalyses the reaction N(6)-(1-hydroxy-2-oxopropyl)-L-lysyl-[protein] + H2O = lactate + L-lysyl-[protein] + H(+). The enzyme catalyses S-(1-hydroxy-2-oxopropyl)-L-cysteinyl-[protein] + H2O = lactate + L-cysteinyl-[protein] + H(+). It carries out the reaction N(omega)-(1-hydroxy-2-oxoethyl)-L-arginyl-[protein] + H2O = L-arginyl-[protein] + glycolate + H(+). The catalysed reaction is N(6)-(1-hydroxy-2-oxoethyl)-L-lysyl-[protein] + H2O = glycolate + L-lysyl-[protein] + H(+). It catalyses the reaction S-(1-hydroxy-2-oxoethyl)-L-cysteinyl-[protein] + H2O = glycolate + L-cysteinyl-[protein] + H(+). The enzyme catalyses N(2)-(1-hydroxy-2-oxopropyl)-dGTP + H2O = lactate + dGTP + H(+). It carries out the reaction N(2)-(1-hydroxy-2-oxopropyl)-GTP + H2O = lactate + GTP + H(+). The catalysed reaction is N(2)-(1-hydroxy-2-oxopropyl)-GDP + H2O = lactate + GDP + H(+). It catalyses the reaction N(2)-(1-hydroxy-2-oxopropyl)-GMP + H2O = lactate + GMP + H(+). The enzyme catalyses N(2)-(1-hydroxy-2-oxoethyl)-dGTP + H2O = dGTP + glycolate + H(+). It carries out the reaction N(2)-(1-hydroxy-2-oxoethyl)-GTP + H2O = glycolate + GTP + H(+). The catalysed reaction is N(2)-(1-hydroxy-2-oxoethyl)-GDP + H2O = glycolate + GDP + H(+). It catalyses the reaction N(2)-(1-hydroxy-2-oxoethyl)-GMP + H2O = glycolate + GMP + H(+). The enzyme catalyses an N(2)-(1-hydroxy-2-oxopropyl)-guanosine in RNA + H2O = a guanosine in RNA + lactate + H(+). It carries out the reaction an N(2)-(1-hydroxy-2-oxopropyl)-2'-deoxyguanosine in DNA + H2O = a 2'-deoxyguanosine in DNA + lactate + H(+). The catalysed reaction is an N(2)-(1-hydroxy-2-oxoethyl)-guanosine in RNA + H2O = a guanosine in RNA + glycolate + H(+). It catalyses the reaction an N(2)-(1-hydroxy-2-oxoethyl)-2'-deoxyguanosine in DNA + H2O = a 2'-deoxyguanosine in DNA + glycolate + H(+). With respect to regulation, glyoxalase activity is inhibited by zinc ions. Active as a chaperone in both its reduced and oxidized states, and is more active in its oxidized form. Its function is as follows. Protein and nucleotide deglycase that catalyzes the deglycation of the Maillard adducts formed between amino groups of proteins or nucleotides and reactive carbonyl groups of glyoxals. Thus, functions as a protein deglycase that repairs methylglyoxal- and glyoxal-glycated proteins, and releases repaired proteins and lactate or glycolate, respectively. Deglycates cysteine, arginine and lysine residues in proteins, and thus reactivates these proteins by reversing glycation by glyoxals. Is able to repair glycated serum albumin, collagen, glyceraldehyde-3-phosphate dehydrogenase, and fructose biphosphate aldolase. Acts on early glycation intermediates (hemithioacetals and aminocarbinols), preventing the formation of Schiff bases and advanced glycation endproducts (AGE) that cause irreversible damage. Also functions as a nucleotide deglycase able to repair glycated guanine in the free nucleotide pool (GTP, GDP, GMP, dGTP) and in DNA and RNA. Is thus involved in a major nucleotide repair system named guanine glycation repair (GG repair), dedicated to reversing methylglyoxal and glyoxal damage via nucleotide sanitization and direct nucleic acid repair. However, is less efficient than Hsp31 and YhbO, suggesting that YajL might be preferentially dedicated to protein repair. Displays a covalent chaperone activity with sulfenylated thiol proteins by forming mixed disulfides with members of the thiol proteome, and preferentially with sulfenylated cellular proteins, upon oxidative stress; these mixed disulfides can be subsequently reduced by low-molecular-weight thiols to regenerate YajL and reduced proteins. Involved in biogenesis of ribosomal proteins, probably as a ribosomal protein-folding chaperone. Confers resistance to oxidative stress. Plays an important role in protection against electrophile/carbonyl stress. The chaperone activity reported for YajL is probably recruited to execute its deglycase activity, to interact with non-native glycated proteins and gain access to partially buried glycated sites. Also displays an apparent glyoxalase activity that in fact reflects its deglycase activity. In Escherichia coli (strain K12), this protein is Protein/nucleic acid deglycase 3 (yajL).